The chain runs to 92 residues: Small ribosomal subunit protein uS19 (92 aa).

This sequence belongs to the universal ribosomal protein uS19 family.

Functionally, protein S19 forms a complex with S13 that binds strongly to the 16S ribosomal RNA. The sequence is that of Small ribosomal subunit protein uS19 from Chelativorans sp. (strain BNC1).